A 561-amino-acid chain; its full sequence is Putative transport protein YbjL (561 aa).

The next 5 helical transmembrane spans lie at 8 to 28 (LLNG…LCLG), 32 to 52 (LGSI…LLGQ), 66 to 86 (FMLF…SIFF), 94 to 114 (MLAL…GKLF), and 158 to 178 (NLSL…IVGA). RCK C-terminal domains lie at 200–288 (RGLD…SFRN) and 292–373 (VFDR…RIGF). 5 consecutive transmembrane segments (helical) span residues 383–403 (LLAF…TFQF), 406–426 (FSFG…LGFM), 451–471 (VFMA…LGAI), 475–495 (MLIA…LFGA), and 540–560 (AIAN…WPGL).

The protein belongs to the AAE transporter (TC 2.A.81) family. YbjL subfamily.

It localises to the cell membrane. In Shigella boydii serotype 4 (strain Sb227), this protein is Putative transport protein YbjL.